The following is a 218-amino-acid chain: Guanylate kinase (218 aa).

In terms of domain architecture, Guanylate kinase-like spans 17-196 (GVLLALSSPS…ALEKLNEILH (180 aa)). 24–31 (SPSGAGKT) provides a ligand contact to ATP.

Belongs to the guanylate kinase family.

It is found in the cytoplasm. The enzyme catalyses GMP + ATP = GDP + ADP. In terms of biological role, essential for recycling GMP and indirectly, cGMP. This is Guanylate kinase from Maricaulis maris (strain MCS10) (Caulobacter maris).